A 349-amino-acid polypeptide reads, in one-letter code: Tetraacyldisaccharide 4'-kinase (349 aa).

58-65 (TAGGSGKT) contacts ATP.

Belongs to the LpxK family.

It catalyses the reaction a lipid A disaccharide + ATP = a lipid IVA + ADP + H(+). It participates in glycolipid biosynthesis; lipid IV(A) biosynthesis; lipid IV(A) from (3R)-3-hydroxytetradecanoyl-[acyl-carrier-protein] and UDP-N-acetyl-alpha-D-glucosamine: step 6/6. Transfers the gamma-phosphate of ATP to the 4'-position of a tetraacyldisaccharide 1-phosphate intermediate (termed DS-1-P) to form tetraacyldisaccharide 1,4'-bis-phosphate (lipid IVA). The polypeptide is Tetraacyldisaccharide 4'-kinase (Shewanella amazonensis (strain ATCC BAA-1098 / SB2B)).